A 1474-amino-acid chain; its full sequence is MKSLLNAFTKKEVPFREAPAYSNRRRRPPNTLAAPRVLLRSNSDNNLNAGAPEWAVCSAATSHRSLSPQLLQQTPSKPDGATKSLGSYAPGPRSRSPSLNRLGGAGEDGKRPQPPHWHVGSPFTPGANKDSLSTFEYPGPRRKLYSAVPGRLFVAIKPYQPQVDGEIPLHRGDRVKVLSIGEGGFWEGSARGHIGWFPAECVEEVQCKPRDSQAETRADRSKKLFRHYTVGSYDSFDAASDCIIEDKTVVLQKKDNEGFGFVLRGAKADTPIEEFTPTPAFPALQYLESVDEGGVAWQAGLRTGDFLIEVNNENVVKVGHRQVVNMIRQGGNHLVLKVVTVTRNLDPDDTARKKAPPPPKRAPTTALTLRSKSMTAELEELGLSLVDKASVRKKKDKPEEIVPASKPSRTAENVAIESRVATIKQRPTSRCFPAASDVNSVYERQGIAVMTPTVPGSPKGPFLGLPRGTMRRQKSIDSRIFLSGITEEERQFLAPPMLKFTRSLSMPDTSEDIPPPPQSVPPSPPPPSPTTYNCPRSPTPRVYGTIKPAFNQNPVAKVPPATRSDTVATMMREKGMFYRRELDRFSLDSEDVYSRSPAPQAAFRTKRGQMPENPYSEVGKIASKAVYVPAKPARRKGMLVKQSNVEDSPEKTCSIPIPTIIVKEPSTSSSGKSSQGSSMEIDPQATEPGQLRPDDSLTVSSPFAAAIAGAVRDREKRLEARRNSPAFLSTDLGDEDVGLGPPAPRMQPSKFPEEGGFGDEDETEQPLLPTPGAAPRELENHFLGGGEAGAQGEAGGPLSSTSKAKGPESGPAAALKSSSPASPENYVHPLTGRLLDPSSPLALALSARDRAMQESQQGHKGEAPKADLNKPLYIDTKMRPSVESGFPPVTRQNTRGPLRRQETENKYETDLSKDRRADDKKNMLINIVDTAQQKSAGLLMVHTVDIPVAGPPLEEEEDREDGDTKPDHSPSTVPEGVPKTEGALQISAAPEPAAAPGRTIVAAGSVEEAVILPFRIPPPPLASVDLDEDFLFTEPLPPPLEFANSFDIPDDRAASVPALADLVKQKKSDTPQPPSLNSSQPANSTDSKKPAGISNCLPSSFLPPPESFDAVTDSGIEEVDSRSSSDHHLETTSTISTVSSISTLSSEGGESMDTCTVYADGQAFVVDKPPVPPKPKMKPIVHKSNALYQDTLPEEDTDGFVIPPPAPPPPPGSAQAGVAKVIQPRTSKLWGDVTEVKSPILSGPKANVISELNSILQQMNRGKSVKPGEGLELPVGAKSANLAPRSPEVMSTVSGTRSTTVTFTVRPGTSQPITLQSRPPDYESRTSGPRRAPSPVVSPTELSKEILPTPPSAAAASPSPTLSDVFSLPSQSPAGDLFGLNPAGRSRSPSPSILQQPISNKPFTTKPVHLWTKPDVADWLESLNLGEHKETFMDNEIDGSHLPNLQKEDLIDLGVTRVGHRMNIERALKQLLDR.

A compositionally biased stretch (polar residues) spans 66 to 76 (LSPQLLQQTPS). The disordered stretch occupies residues 66–125 (LSPQLLQQTPSKPDGATKSLGSYAPGPRSRSPSLNRLGGAGEDGKRPQPPHWHVGSPFTP). In terms of domain architecture, SH3 spans 148 to 207 (VPGRLFVAIKPYQPQVDGEIPLHRGDRVKVLSIGEGGFWEGSARGHIGWFPAECVEEVQC). Position 162 is a phosphoserine (Q162). A PDZ domain is found at 248 to 342 (TVVLQKKDNE…HLVLKVVTVT (95 aa)). At S373 the chain carries Phosphoserine. Residues 392 to 413 (RKKKDKPEEIVPASKPSRTAEN) form a disordered region. Residue S457 is modified to Phosphoserine. At T486 the chain carries Phosphothreonine. The tract at residues 504–534 (LSMPDTSEDIPPPPQSVPPSPPPPSPTTYNC) is disordered. Positions 513 to 529 (IPPPPQSVPPSPPPPSP) are enriched in pro residues. S586 carries the post-translational modification Phosphoserine. Disordered regions lie at residues 659-920 (TIIV…ADDK), 947-995 (PVAG…PAAA), and 1057-1153 (PALA…ESMD). The span at 666–678 (STSSSGKSSQGSS) shows a compositional bias: low complexity. A compositionally biased stretch (basic and acidic residues) spans 711 to 722 (VRDREKRLEARR). S724 carries the post-translational modification Phosphoserine. Over residues 783–795 (LGGGEAGAQGEAG) the composition is skewed to gly residues. Composition is skewed to low complexity over residues 811 to 823 (PAAA…PASP) and 833 to 846 (RLLD…LALS). Composition is skewed to basic and acidic residues over residues 847–868 (ARDR…KADL) and 899–920 (RRQE…ADDK). The residue at position 903 (T903) is a Phosphothreonine. The segment covering 1075–1085 (SLNSSQPANST) has biased composition (polar residues). Residues 1119-1130 (VDSRSSSDHHLE) are compositionally biased toward basic and acidic residues. The span at 1131–1151 (TTSTISTVSSISTLSSEGGES) shows a compositional bias: low complexity. The SH3-binding motif lies at 1169 to 1175 (PPVPPKP). 2 disordered regions span residues 1195 to 1216 (EDTD…SAQA) and 1260 to 1401 (NRGK…ISNK). The span at 1202 to 1212 (IPPPAPPPPPG) shows a compositional bias: pro residues. Residues 1291-1305 (STVSGTRSTTVTFTV) are compositionally biased toward low complexity. The O-linked (GlcNAc) threonine glycan is linked to T1292. The segment covering 1307–1317 (PGTSQPITLQS) has biased composition (polar residues). Phosphoserine occurs at positions 1334 and 1338. Low complexity-rich tracts occupy residues 1352-1363 (SAAAASPSPTLS) and 1385-1399 (RSRS…QPIS). The 64-residue stretch at 1411-1474 (WTKPDVADWL…ERALKQLLDR (64 aa)) folds into the SAM domain.

The protein belongs to the SHANK family. As to quaternary structure, is part of a complex with DLG4/PSD-95 and DLGAP1/GKAP. Interacts with CTTN/cortactin SH3 domain, DLGAP1/GKAP and alpha-latrotoxin receptor 1. Interacts with DNM2, DBNL, GRID2, BAIAP2, SLC9A3, PLCB3 and CFTR. Interacts with ABI1 (via SH3 domain). Interacts (via proline-rich region) with PDE4D isoform 5 (via N-terminal region). Interacts with PDE4D isoform 33, isoform 4, isoform 7, isoform 8 and isoform 9 but not isoform 32 and isoform 6. Interacts weakly with PDE4D isoform 31. Interacts with ABI1. In terms of tissue distribution, expressed in epithelial cells (at protein level). All isoforms except isoform 7 are expressed predominantly in brain, with highest levels in olfactory bulb, cerebral cortex, cerebellum, central gray matter and hippocampus. Moderate levels of expression are seen in the caudate putamen, thalamic nuclei and brain stem. In cerebellum primarily expressed in Purkinje cells. Isoform 7 is not expressed in brain but expressed in liver, cholangiocytes and thymus. Isoform 7 is present in pancreas, colonic mucosa and thymocytes (at protein level).

The protein localises to the apical cell membrane. Its subcellular location is the cytoplasm. It is found in the synapse. The protein resides in the postsynaptic density. It localises to the cell projection. The protein localises to the growth cone. Its subcellular location is the dendritic spine. Seems to be an adapter protein in the postsynaptic density (PSD) of excitatory synapses that interconnects receptors of the postsynaptic membrane including NMDA-type and metabotropic glutamate receptors, and the actin-based cytoskeleton. May play a role in the structural and functional organization of the dendritic spine and synaptic junction. In Rattus norvegicus (Rat), this protein is SH3 and multiple ankyrin repeat domains protein 2 (Shank2).